A 330-amino-acid polypeptide reads, in one-letter code: MARMYYDEDANLDLLAGKTIAIIGYGSQGHAHALNLKDSGVNVIVGLYPGSKSAIKAKEAGIPVYDVAEAAKIADWIMILLPDEVQKTIYLNEIAPNLSAGKVLSFAHGFNIHFGQVVPPANVDVVMVAPKGPGHLVRRTYEQGQGVPCLFAVYQDATGQARDRAMAYAKGIGGTRAGVLETTFREETETDLFGEQAVLCGGLSALIKAGFETLVEAGYQPELAYFECLHEVKLIVDLIVEGGLAKMRDSISNTAEYGDYTRGPRVVTEATKAEMRKILGEIQSGQFAREFVLENQAGKPGFTAMRRQEAEHSIEEVGQDLRAMMSWLKR.

Positions 2-182 (ARMYYDEDAN…GGTRAGVLET (181 aa)) constitute a KARI N-terminal Rossmann domain. Residues 25-28 (YGSQ), Ser-51, Ser-53, and 83-86 (DEVQ) each bind NADP(+). His-108 is an active-site residue. Gly-134 contacts NADP(+). Residues 183–328 (TFREETETDL…QDLRAMMSWL (146 aa)) form the KARI C-terminal knotted domain. The Mg(2+) site is built by Asp-191, Glu-195, Glu-227, and Glu-231. Ser-252 serves as a coordination point for substrate.

This sequence belongs to the ketol-acid reductoisomerase family. Requires Mg(2+) as cofactor.

The catalysed reaction is (2R)-2,3-dihydroxy-3-methylbutanoate + NADP(+) = (2S)-2-acetolactate + NADPH + H(+). It catalyses the reaction (2R,3R)-2,3-dihydroxy-3-methylpentanoate + NADP(+) = (S)-2-ethyl-2-hydroxy-3-oxobutanoate + NADPH + H(+). The protein operates within amino-acid biosynthesis; L-isoleucine biosynthesis; L-isoleucine from 2-oxobutanoate: step 2/4. Its pathway is amino-acid biosynthesis; L-valine biosynthesis; L-valine from pyruvate: step 2/4. Involved in the biosynthesis of branched-chain amino acids (BCAA). Catalyzes an alkyl-migration followed by a ketol-acid reduction of (S)-2-acetolactate (S2AL) to yield (R)-2,3-dihydroxy-isovalerate. In the isomerase reaction, S2AL is rearranged via a Mg-dependent methyl migration to produce 3-hydroxy-3-methyl-2-ketobutyrate (HMKB). In the reductase reaction, this 2-ketoacid undergoes a metal-dependent reduction by NADPH to yield (R)-2,3-dihydroxy-isovalerate. In Microcystis aeruginosa (strain NIES-843 / IAM M-2473), this protein is Ketol-acid reductoisomerase (NADP(+)).